A 519-amino-acid chain; its full sequence is Lysine histidine transporter-like 8 (519 aa).

The interval Met-1 to Thr-44 is disordered. Over Met-1 to Ala-114 the chain is Cytoplasmic. Transmembrane regions (helical) follow at residues Leu-115 to Ile-135 and Ala-136 to Gly-156. At Lys-157–Val-176 the chain is on the cytoplasmic side. A helical membrane pass occupies residues Trp-177–Ile-197. The Extracellular portion of the chain corresponds to Gly-198–Asn-217. A helical membrane pass occupies residues Pro-218–Leu-238. At Pro-239–Ser-243 the chain is on the cytoplasmic side. Residues Ile-244–Val-264 traverse the membrane as a helical segment. Topologically, residues Leu-265–Met-282 are extracellular. Residues Pro-283–Phe-303 traverse the membrane as a helical segment. Residues Arg-304–Lys-333 are Cytoplasmic-facing. The helical transmembrane segment at Ile-334–Tyr-354 threads the bilayer. Residues Gly-355–Arg-377 lie on the Extracellular side of the membrane. Residues Gly-378–Tyr-398 traverse the membrane as a helical segment. Residues Ser-399–Arg-427 lie on the Cytoplasmic side of the membrane. Residues Val-428–Ala-448 traverse the membrane as a helical segment. A topological domain (extracellular) is located at residue Gly-449. The helical transmembrane segment at Leu-450–Ile-470 threads the bilayer. Residues Lys-471 to Gly-485 lie on the Cytoplasmic side of the membrane. The chain crosses the membrane as a helical span at residues Leu-486 to Val-506. Residues Thr-507–Asn-519 are Extracellular-facing.

Belongs to the amino acid/polyamine transporter 2 family. Amino acid/auxin permease (AAAP) (TC 2.A.18.2) subfamily.

It localises to the cell membrane. Amino acid transporter. The sequence is that of Lysine histidine transporter-like 8 (AATL1) from Arabidopsis thaliana (Mouse-ear cress).